Consider the following 83-residue polypeptide: Probable calcium-binding protein CML28 (83 aa).

2 EF-hand domains span residues 5–40 (TEKAEHDRIFKKFDANGDGKISAAELGDALKNLGSV) and 43–75 (EDIKRMMAEIDTDGDGYISYQEFIDFASANRGL). Ca(2+) is bound by residues Asp18, Asn20, Asp22, Lys24, Glu29, Asp53, Asp55, Asp57, Tyr59, and Glu64.

Functionally, potential calcium sensor. The protein is Probable calcium-binding protein CML28 (CML28) of Arabidopsis thaliana (Mouse-ear cress).